The chain runs to 780 residues: E3 UFM1-protein ligase 1 homolog (780 aa).

The segment covering 403–413 (STSSTNPNHST) has biased composition (polar residues). 2 disordered regions span residues 403 to 458 (STSS…RSHI) and 734 to 760 (SSDKQKPEMSEEPKDSDNSNDNQNIDL). Basic and acidic residues-rich tracts occupy residues 443–458 (KDRSTPDDLESTRSHI) and 736–750 (DKQKPEMSEEPKDSD).

It belongs to the UFL1 family.

Its function is as follows. E3 UFM1-protein ligase that mediates ufmylation of target proteins. This is E3 UFM1-protein ligase 1 homolog from Trichoplax adhaerens (Trichoplax reptans).